We begin with the raw amino-acid sequence, 382 residues long: Alkanesulfonate monooxygenase (382 aa).

This sequence belongs to the SsuD family.

The catalysed reaction is an alkanesulfonate + FMNH2 + O2 = an aldehyde + FMN + sulfite + H2O + 2 H(+). Functionally, catalyzes the desulfonation of aliphatic sulfonates. The sequence is that of Alkanesulfonate monooxygenase from Pseudomonas putida (strain ATCC 700007 / DSM 6899 / JCM 31910 / BCRC 17059 / LMG 24140 / F1).